The following is a 680-amino-acid chain: Harmonin-binding protein USHBP1 (680 aa).

The span at 1-15 (MSARATRPRSRRGRH) shows a compositional bias: basic residues. Disordered stretches follow at residues 1–51 (MSAR…YLGP) and 134–161 (KSVE…PGQQ). The stretch at 179-218 (NREDELACTQASLQDAQAEKETLQRQVQELEDSLMQMEAS) forms a coiled coil. Disordered regions lie at residues 220–247 (PTPI…VPQD) and 384–405 (TMEV…PTPE). 2 coiled-coil regions span residues 363–386 (TKGD…ATME) and 467–506 (QIQQ…LRAQ). A disordered region spans residues 524 to 549 (FAGDGSSGGSSEDPSSEEEAGEDRQQ). The stretch at 573–662 (QELSASLARA…QAEELAVLTA (90 aa)) forms a coiled coil.

Belongs to the MCC family. As to quaternary structure, interacts via its C-terminus with the first PDZ domain of USH1C.

The sequence is that of Harmonin-binding protein USHBP1 from Mus musculus (Mouse).